Reading from the N-terminus, the 236-residue chain is Sugar fermentation stimulation protein homolog (236 aa).

Belongs to the SfsA family.

The protein is Sugar fermentation stimulation protein homolog of Gloeobacter violaceus (strain ATCC 29082 / PCC 7421).